A 932-amino-acid chain; its full sequence is Protocadherin gamma-A7 (932 aa).

The first 28 residues, 1–28 (MAAQPRGGDYRGFFLLSILLGTPWEAWA), serve as a signal peptide directing secretion. Cadherin domains follow at residues 29–133 (GRIL…VPRF), 134–242 (LTEE…TPVF), 243–347 (SLPQ…APEV), 348–452 (TMTS…PPTF), 453–562 (PHSS…PPEI), and 570–682 (DGST…EPSD). The Extracellular segment spans residues 29–692 (GRILYSVSEE…GPYNYDLTLY (664 aa)). N-linked (GlcNAc...) asparagine glycosylation is found at asparagine 419 and asparagine 545. A helical membrane pass occupies residues 693 to 713 (LVVAVATVSCVFLAFVLVLLA). The Cytoplasmic portion of the chain corresponds to 714–932 (LRLRRWHKSR…KKKSGKKEKK (219 aa)). 2 disordered regions span residues 805–841 (PSIQ…WPNN) and 902–932 (ATLT…KEKK). The segment covering 922–932 (NKKKSGKKEKK) has biased composition (basic residues).

It is found in the cell membrane. Potential calcium-dependent cell-adhesion protein. May be involved in the establishment and maintenance of specific neuronal connections in the brain. The sequence is that of Protocadherin gamma-A7 (PCDHGA7) from Homo sapiens (Human).